Consider the following 403-residue polypeptide: Serine/threonine transporter SstT (403 aa).

9 helical membrane-spanning segments follow: residues 14–34, 44–64, 79–99, 138–158, 175–195, 214–234, 295–315, 327–347, and 353–373; these read VTQI…APAI, VFVS…VMAS, ILWL…FASM, ALLN…GVAL, GVTL…FGLV, LAVL…LIVF, MAGA…TLGI, VVAA…LLLI, and LFGI…IIGV.

Belongs to the dicarboxylate/amino acid:cation symporter (DAACS) (TC 2.A.23) family.

It localises to the cell inner membrane. It carries out the reaction L-serine(in) + Na(+)(in) = L-serine(out) + Na(+)(out). The catalysed reaction is L-threonine(in) + Na(+)(in) = L-threonine(out) + Na(+)(out). Involved in the import of serine and threonine into the cell, with the concomitant import of sodium (symport system). The protein is Serine/threonine transporter SstT of Pseudomonas putida (strain ATCC 47054 / DSM 6125 / CFBP 8728 / NCIMB 11950 / KT2440).